Consider the following 196-residue polypeptide: MVKIGVLGLQGAVREHVKSVEASGAEAVVVKRIEQLEEIDGLILPGGESTTMRRLIDKYAFMEPLRTFAKSGKPMFGTCAGMILLAKTLIGYEEAHIGAMDITVERNAFGRQKDSFEAALSIEGVGEDFVGVFIRAPYVVEVADNVEVLSKHGDRMVAVRQDQFLAASFHPELTDDHRVTAYFVEMVKEAKMKKVV.

Glycine 47–serine 49 lines the L-glutamine pocket. Cysteine 79 serves as the catalytic Nucleophile. L-glutamine-binding positions include arginine 106 and isoleucine 134–arginine 135. Active-site charge relay system residues include histidine 170 and glutamate 172.

It belongs to the glutaminase PdxT/SNO family. As to quaternary structure, in the presence of PdxS, forms a dodecamer of heterodimers. Only shows activity in the heterodimer.

It carries out the reaction aldehydo-D-ribose 5-phosphate + D-glyceraldehyde 3-phosphate + L-glutamine = pyridoxal 5'-phosphate + L-glutamate + phosphate + 3 H2O + H(+). It catalyses the reaction L-glutamine + H2O = L-glutamate + NH4(+). It functions in the pathway cofactor biosynthesis; pyridoxal 5'-phosphate biosynthesis. Its function is as follows. Catalyzes the hydrolysis of glutamine to glutamate and ammonia as part of the biosynthesis of pyridoxal 5'-phosphate. The resulting ammonia molecule is channeled to the active site of PdxS. This is Pyridoxal 5'-phosphate synthase subunit PdxT from Bacillus cereus (strain G9842).